Reading from the N-terminus, the 181-residue chain is Large ribosomal subunit protein uL5 (181 aa).

This sequence belongs to the universal ribosomal protein uL5 family. In terms of assembly, part of the 50S ribosomal subunit; part of the 5S rRNA/L5/L18/L25 subcomplex. Contacts the 5S rRNA and the P site tRNA. Forms a bridge to the 30S subunit in the 70S ribosome.

This is one of the proteins that bind and probably mediate the attachment of the 5S RNA into the large ribosomal subunit, where it forms part of the central protuberance. In the 70S ribosome it contacts protein S13 of the 30S subunit (bridge B1b), connecting the 2 subunits; this bridge is implicated in subunit movement. Contacts the P site tRNA; the 5S rRNA and some of its associated proteins might help stabilize positioning of ribosome-bound tRNAs. In Mycoplasmopsis pulmonis (strain UAB CTIP) (Mycoplasma pulmonis), this protein is Large ribosomal subunit protein uL5.